The following is a 66-amino-acid chain: UPF0434 protein Mnod_1613 (66 aa).

The protein belongs to the UPF0434 family.

This chain is UPF0434 protein Mnod_1613, found in Methylobacterium nodulans (strain LMG 21967 / CNCM I-2342 / ORS 2060).